The primary structure comprises 59 residues: Large ribosomal subunit protein bL32 (59 aa).

Belongs to the bacterial ribosomal protein bL32 family.

The polypeptide is Large ribosomal subunit protein bL32 (Desulfitobacterium hafniense (strain Y51)).